We begin with the raw amino-acid sequence, 109 residues long: uncharacterized protein (109 aa).

The interval 36–109 (NSSNNLNNNN…KKKKKKRRVK (74 aa)) is disordered. Residues 39–88 (NNLNNNNFNENNLKNNNNRNGNNNNNNNNNNNNNNNNNNNNNNNNNNNNN) show a composition bias toward low complexity. The segment covering 99–109 (QKKKKKKRRVK) has biased composition (basic residues).

This is an uncharacterized protein from Dictyostelium discoideum (Social amoeba).